Reading from the N-terminus, the 479-residue chain is FAD-dependent monooxygenase cdmI (479 aa).

3 residues coordinate FAD: E43, G57, and R116. N-linked (GlcNAc...) asparagine glycans are attached at residues N156 and N198. FAD is bound by residues D315 and A328. A helical transmembrane segment spans residues 453-473; it reads PFILAVLAGLGFLLTMFKQQW.

This sequence belongs to the paxM FAD-dependent monooxygenase family. FAD is required as a cofactor.

The protein localises to the membrane. The catalysed reaction is verruculide C + AH2 + O2 = verruculide C epoxide + A + H2O. Its pathway is secondary metabolite biosynthesis; terpenoid biosynthesis. FAD-dependent monooxygenase; part of the gene cluster that mediates the biosynthesis of chrodrimanin B, a meroterpenoid that acts as a potent blocker of insect GABA-gated chloride channels. The first step of the pathway is the biosynthesis of 6-hydroxymellein by the polyketide synthase cdmE. The prenyltransferase cdmH acts as a 6-hydroxymellein 5-farnesyltransferase and produces the hydrophobic metabolite verruculide C. The FAD-dependent monooxygenase cdmI further converts verruculide C into verruculide B. The terpene cyclase cdmG then produced the pentacyclic molecule 3-hydroxypentacecilide A, the backbone structure of chrodrimanin B, via folding the farnesyl moiety of the substrate into the chair-boat conformation. The short-chain dehydrogenase/reductase cdmF functions as the 3-OH dehydrogenase that oxidizes the C-3 hydroxyl group of 3-hydroxypentacecilide A and produces chrodrimanin C, the dehydrogenated product of 3-hydroxypentacecilide A. The cytochrome P450 monooxygenase cdmJ then accepts both 3-hydroxypentacecilide A and chrodrimanin C and functions as a C-7-beta-hydroxylase to produce respectively chrodrimanin H and chrodrimanin F. The dioxygenase cdmA accepts chrodrimanin H to afford chrodrimanin E, which is further transformed to chrodrimanin A by the dioxygenase cdmD. CdmA can also accept chrodrimanin C as substrate to convert it into verruculide A, which is further converted into chrodrimanin T by cdmD. The last step of the biosynthesis is proposed to be performed by the acetyltransferase cdmC which acetylates chrodrimanin A to yield chrodrimanin B. The pathway may also lead to the production of additional shunt products, including chrodrimanins T and U. In Talaromyces verruculosus (Penicillium verruculosum), this protein is FAD-dependent monooxygenase cdmI.